We begin with the raw amino-acid sequence, 145 residues long: Ribosome-binding factor A (145 aa).

The tract at residues 126-145 (RDLDTETDAEAGSETTKEED) is disordered. Over residues 130 to 145 (TETDAEAGSETTKEED) the composition is skewed to acidic residues.

It belongs to the RbfA family. Monomer. Binds 30S ribosomal subunits, but not 50S ribosomal subunits or 70S ribosomes.

The protein resides in the cytoplasm. Its function is as follows. One of several proteins that assist in the late maturation steps of the functional core of the 30S ribosomal subunit. Associates with free 30S ribosomal subunits (but not with 30S subunits that are part of 70S ribosomes or polysomes). Required for efficient processing of 16S rRNA. May interact with the 5'-terminal helix region of 16S rRNA. In Azorhizobium caulinodans (strain ATCC 43989 / DSM 5975 / JCM 20966 / LMG 6465 / NBRC 14845 / NCIMB 13405 / ORS 571), this protein is Ribosome-binding factor A.